Reading from the N-terminus, the 2135-residue chain is Nonribosomal peptide synthetase gliP (2135 aa).

The adenylation 1 stretch occupies residues 34-424 (TYTELDVASS…LPADVEEPLR (391 aa)). The region spanning 519-594 (TEREQVIAEC…GILPYARDLA (76 aa)) is the Carrier 1 domain. At Ser555 the chain carries O-(pantetheine 4'-phosphoryl)serine. Residues 663–913 (AEHICNAWRQ…MATLPLVCRI (251 aa)) form a condensation 1 region. The adenylation 2 stretch occupies residues 1078-1458 (YRELDQKSNA…YQEEPRLTQA (381 aa)). A Carrier 2 domain is found at 1544 to 1622 (ASIADGIATL…EQVELVRRKR (79 aa)). O-(pantetheine 4'-phosphoryl)serine is present on Ser1582. Residues 1642 to 1905 (SPLERQTWFQ…FLDRLPLRFK (264 aa)) form a condensation 2 region. The Carrier 3 domain maps to 2061-2134 (RRLVGILQRE…DLAQRLYRQV (74 aa)). At Ser2095 the chain carries O-(pantetheine 4'-phosphoryl)serine.

This sequence belongs to the NRP synthetase family.

It participates in mycotoxin biosynthesis. Its function is as follows. Nonribosomal peptide synthetase; part of the gene cluster that mediates the biosynthesis of gliotoxin, a member of the epipolythiodioxopiperazine (ETP) class of toxins characterized by a disulfide-bridged cyclic dipeptide. The first step in gliotoxin biosynthesis is the condensation of serine and phenylalanine to form the cyclo-L-phenylalanyl-L-serine diketopiperazine (DKP) by the NRPS gliP. GliP is also able to produce the DKP cyclo-L-tryptophanyl-L-serine, suggesting that the substrate specificity of the first adenylation (A) domain in gliP is sufficiently relaxed to accommodate both L-Phe and L-Trp. The cytochrome P450 monooxygenase gliC has been shown to catalyze the subsequent hydroxylation of the alpha-carbon of L-Phe in cyclo-L-phenylalanyl-L-serine whereas the second cytochrome P450 enzyme, gliF, is presumably involved in the modification of the DKP side chain. The glutathione S-transferase (GST) gliG then forms a bis-glutathionylated biosynthetic intermediate which is responsible for the sulfurization of gliotoxin. This bis-glutathionylated intermediate is subsequently processed by the gamma-glutamyl cyclotransferase gliK to remove both gamma-glutamyl moieties. Subsequent processing via gliI yields a biosynthetic intermediate, which is N-methylated via the N-methyltransferase gliN, before the gliotoxin oxidoreductase gliT-mediated disulfide bridge closure. GliN-mediated amide methylation confers stability to ETP, damping the spontaneous formation of tri- and tetrasulfides. Intracellular dithiol gliotoxin oxidized by gliT is subsequently effluxed by gliA. Gliotoxin contributes to pathogenesis during invasive aspergillosis. In macrophages and neutrophils, gliotoxin showed inhibition of various different cell functions including cytokine production, antigen presentation, phagocytosis, and production of reactive oxygen species. The sequence is that of Nonribosomal peptide synthetase gliP from Aspergillus fumigatus (strain ATCC MYA-4609 / CBS 101355 / FGSC A1100 / Af293) (Neosartorya fumigata).